The primary structure comprises 331 residues: Ornithine carbamoyltransferase (331 aa).

Carbamoyl phosphate contacts are provided by residues 55 to 58, Gln82, Arg106, and 133 to 136; these read STRT and HPTQ. Residues Asn166, Asp230, and 234–235 each bind L-ornithine; that span reads SM. Carbamoyl phosphate is bound by residues 272 to 273 and Arg317; that span reads CL.

This sequence belongs to the aspartate/ornithine carbamoyltransferase superfamily. OTCase family.

The protein resides in the cytoplasm. The enzyme catalyses carbamoyl phosphate + L-ornithine = L-citrulline + phosphate + H(+). It participates in amino-acid biosynthesis; L-arginine biosynthesis; L-arginine from L-ornithine and carbamoyl phosphate: step 1/3. Functionally, reversibly catalyzes the transfer of the carbamoyl group from carbamoyl phosphate (CP) to the N(epsilon) atom of ornithine (ORN) to produce L-citrulline. This chain is Ornithine carbamoyltransferase, found in Neisseria gonorrhoeae (strain ATCC 700825 / FA 1090).